Consider the following 343-residue polypeptide: Glucokinase (343 aa).

Residue 18-23 participates in ATP binding; sequence GDIGGT.

Belongs to the bacterial glucokinase family.

It localises to the cytoplasm. It catalyses the reaction D-glucose + ATP = D-glucose 6-phosphate + ADP + H(+). The protein is Glucokinase of Brucella suis biovar 1 (strain 1330).